The sequence spans 151 residues: 3-hydroxyacyl-[acyl-carrier-protein] dehydratase FabZ (151 aa).

His-52 is a catalytic residue.

This sequence belongs to the thioester dehydratase family. FabZ subfamily.

Its subcellular location is the cytoplasm. It carries out the reaction a (3R)-hydroxyacyl-[ACP] = a (2E)-enoyl-[ACP] + H2O. Involved in unsaturated fatty acids biosynthesis. Catalyzes the dehydration of short chain beta-hydroxyacyl-ACPs and long chain saturated and unsaturated beta-hydroxyacyl-ACPs. In Lactococcus lactis subsp. lactis (strain IL1403) (Streptococcus lactis), this protein is 3-hydroxyacyl-[acyl-carrier-protein] dehydratase FabZ (fabZ1).